A 443-amino-acid polypeptide reads, in one-letter code: Structure-specific endonuclease subunit SLX1 (443 aa).

In terms of domain architecture, GIY-YIG spans 13-93 (RVYVCYCLRS…QKPHASRHLR (81 aa)). The disordered stretch occupies residues 121-140 (FPATRSSAPSSAASHDSGLN). The SLX1-type zinc finger occupies 361 to 419 (CGLCGGHINRHVPLSYTHCPHACDAVFHLTCLARYSLEQETRAHARTFCLPTSAWCPMC).

It belongs to the SLX1 family. In terms of assembly, forms a heterodimer with SLX4. A divalent metal cation serves as cofactor.

The protein localises to the nucleus. Its function is as follows. Catalytic subunit of the SLX1-SLX4 structure-specific endonuclease that resolves DNA secondary structures generated during DNA repair and recombination. Has endonuclease activity towards branched DNA substrates, introducing single-strand cuts in duplex DNA close to junctions with ss-DNA. The sequence is that of Structure-specific endonuclease subunit SLX1 from Malassezia globosa (strain ATCC MYA-4612 / CBS 7966) (Dandruff-associated fungus).